We begin with the raw amino-acid sequence, 161 residues long: Nucleotide-binding protein PFLU_4927 (161 aa).

Belongs to the YajQ family.

Nucleotide-binding protein. In Pseudomonas fluorescens (strain SBW25), this protein is Nucleotide-binding protein PFLU_4927.